The chain runs to 125 residues: Interferon-induced transmembrane protein 1 (125 aa).

Residues 1 to 36 (MHKEEHEVAVLGPPPSTILPRSTVINIHSETSVPDH) lie on the Cytoplasmic side of the membrane. Ser-16 is subject to Phosphoserine. The segment at residues 37 to 57 (VVWSLFNTLFLNWCCLGFIAF) is an intramembrane region (helical). Residues Cys-50, Cys-51, and Cys-84 are each lipidated (S-palmitoyl cysteine). Residues 58-86 (AYSVKSRDRKMVGDVTGAQAYASTAKCLN) are Cytoplasmic-facing. The tract at residues 84–125 (CLNIWALILGILMTIGFILLLVFGSVTVYHIMLQIIQEKRGY) is interaction with CAV1. A helical membrane pass occupies residues 87–107 (IWALILGILMTIGFILLLVFG). At 108–125 (SVTVYHIMLQIIQEKRGY) the chain is on the extracellular side.

Belongs to the CD225/Dispanin family. Interacts with CD81. Part of a complex composed of CD19, CR2/CD21, CD81 and IFITM1/CD225 in the membrane of mature B-cells. Interacts with CAV1; this interaction enhances the ability of CAV1 in inhibiting ERK activation. Post-translationally, palmitoylation on membrane-proximal cysteines controls clustering in membrane compartments and antiviral activity. Bone (at protein level). Levels greatly elevated in colon cancer, cervical cancer, esophageal cancer and ovarian cancer. Expressed in glioma cell lines.

It is found in the cell membrane. Its subcellular location is the lysosome membrane. IFN-induced antiviral protein which inhibits the entry of viruses to the host cell cytoplasm, permitting endocytosis, but preventing subsequent viral fusion and release of viral contents into the cytosol. Active against multiple viruses, including influenza A virus, SARS coronaviruses (SARS-CoV and SARS-CoV-2), Marburg virus (MARV), Ebola virus (EBOV), Dengue virus (DNV), West Nile virus (WNV), human immunodeficiency virus type 1 (HIV-1) and hepatitis C virus (HCV). Can inhibit: influenza virus hemagglutinin protein-mediated viral entry, MARV and EBOV GP1,2-mediated viral entry and SARS-CoV and SARS-CoV-2 S protein-mediated viral entry. Also implicated in cell adhesion and control of cell growth and migration. Inhibits SARS-CoV-2 S protein-mediated syncytia formation. Plays a key role in the antiproliferative action of IFN-gamma either by inhibiting the ERK activation or by arresting cell growth in G1 phase in a p53-dependent manner. Acts as a positive regulator of osteoblast differentiation. In hepatocytes, IFITM proteins act in a coordinated manner to restrict HCV infection by targeting the endocytosed HCV virion for lysosomal degradation. IFITM2 and IFITM3 display anti-HCV activity that may complement the anti-HCV activity of IFITM1 by inhibiting the late stages of HCV entry, possibly in a coordinated manner by trapping the virion in the endosomal pathway and targeting it for degradation at the lysosome. The protein is Interferon-induced transmembrane protein 1 of Homo sapiens (Human).